A 443-amino-acid chain; its full sequence is Tubulin beta-3 chain (443 aa).

8 residues coordinate GTP: Q11, E69, S138, G142, T143, G144, N204, and N226. E69 is a Mg(2+) binding site.

This sequence belongs to the tubulin family. In terms of assembly, dimer of alpha and beta chains. A typical microtubule is a hollow water-filled tube with an outer diameter of 25 nm and an inner diameter of 15 nM. Alpha-beta heterodimers associate head-to-tail to form protofilaments running lengthwise along the microtubule wall with the beta-tubulin subunit facing the microtubule plus end conferring a structural polarity. Microtubules usually have 13 protofilaments but different protofilament numbers can be found in some organisms and specialized cells. It depends on Mg(2+) as a cofactor.

It is found in the cytoplasm. Its subcellular location is the cytoskeleton. Its function is as follows. Tubulin is the major constituent of microtubules, a cylinder consisting of laterally associated linear protofilaments composed of alpha- and beta-tubulin heterodimers. Microtubules grow by the addition of GTP-tubulin dimers to the microtubule end, where a stabilizing cap forms. Below the cap, tubulin dimers are in GDP-bound state, owing to GTPase activity of alpha-tubulin. This chain is Tubulin beta-3 chain (TUB-3), found in Echinococcus multilocularis (Fox tapeworm).